The primary structure comprises 509 residues: Cytochrome P450 monooxygenase fumoA (509 aa).

The helical transmembrane segment at 5-27 (LANLNFPYLILSACLSAILLSRF) threads the bilayer. N-linked (GlcNAc...) asparagine glycans are attached at residues Asn-317, Asn-369, and Asn-378. Position 456 (Cys-456) interacts with heme. Residue Asn-464 is glycosylated (N-linked (GlcNAc...) asparagine).

The protein belongs to the cytochrome P450 family. Heme is required as a cofactor.

The protein resides in the membrane. It participates in secondary metabolite biosynthesis. Functionally, cytochrome P450 monooxygenase; part of the gene cluster that mediates the biosynthesis of fumosorinone, a 2-pyridone alkaloid that acts as an inhibitor of protein tyrosine phosphatase 1B which is implicated asa negative regulator of insulin receptor signaling and a potential drug target for the treatment of type II diabetes and other associated metabolic syndromes. The polyketide-amino acid backbone of fumosorinone is first assembled by the PKS-NRPS hybrid fumoS. The PKS modules condense one acetyl-CoA starter unit with 7 malonyl-CoA units, programmed C-methylations occurring after the first 3 and the sixth extensions, and cycles of full reduction occurring after the first 2 extensions. Because fumoS lacks a designated enoyl reductase (ER) domain, the required activity is provided the enoyl reductase fumoC. Upon formation of the polyketide backbone on the thiotemplate, the polyketide is transferred to the NRPS module and linked to tyrosine to produce the acyltetramic acid intermediate called prefumosorinone A. The cytochrome P450 monooxygenase fumoA then probably catalyzes an unprecedented oxidative ring expansion of prefumosorinone A to form prefumosorinone B which contains the 2-pyridone core of fumosorinone. The cytochrome P450 monooxygenase fumoB might hydroxylate the nitrogen of prefumosorinone B, but not the acyltetramic acid prefumosorinone A, to form fumosorinone. The polypeptide is Cytochrome P450 monooxygenase fumoA (Cordyceps fumosorosea (strain ARSEF 2679) (Isaria fumosorosea)).